The primary structure comprises 427 residues: Dorsalin-1 (427 aa).

The N-terminal stretch at 1–20 (MHYFGVLAALSVFNIIACLT) is a signal peptide. The propeptide occupies 21-318 (RGKPLENWKK…PRQHSSRSKR (298 aa)). Residues asparagine 71, asparagine 136, asparagine 265, and asparagine 292 are each glycosylated (N-linked (GlcNAc...) asparagine). The segment at 288–321 (KLGKNDSSSEEEQREEKAIARPRQHSSRSKRSIG) is disordered. Residues 307–321 (ARPRQHSSRSKRSIG) show a composition bias toward basic residues. 3 disulfide bridges follow: cysteine 325/cysteine 391, cysteine 354/cysteine 424, and cysteine 358/cysteine 426.

This sequence belongs to the TGF-beta family. As to quaternary structure, homodimer; disulfide-linked. As to expression, expressed selectively in the dorsal neural tube. Lower levels seen in kidney and myotomal cells.

The protein localises to the secreted. Appears to regulate cell differentiation within the neural tube. May regulate the differentiation of cell types along the dorsoventral axis of the neural tube, acting in conjunction with distinct ventralizing signals from the notochord and floor plate. Controls the cell differentiation in the neural tube in several ways: (1) promotes the differentiation of cell types that derive from the dorsal neural tube. (2) ensures that the dorsal neural tube is refractory to ventralizing species from the notochord. (3) can diffuse and influence the fate of cells in more ventral regions of the neural tube. The chain is Dorsalin-1 (DSL1) from Gallus gallus (Chicken).